Consider the following 545-residue polypeptide: Endo-beta-N-acetylglucosaminidase (545 aa).

An N-terminal signal peptide occupies residues 1–36 (MTFIKQMMPRYVASMTAGIVAAAMAATCAFAPVANA). Residues 51–333 (RHFMVYYRAW…EDLRRIVPSN (283 aa)) form the GH18 domain. Catalysis depends on Glu184, which acts as the Proton donor. The disordered stretch occupies residues 486-511 (PVPTPDSTDQNGNRDKVTNHKVQGQP). The helical transmembrane segment at 518–538 (GISTDIIVAVGVTLAIAGVAL) threads the bilayer.

Belongs to the glycosyl hydrolase 18 family.

The protein localises to the cell membrane. It carries out the reaction an N(4)-(oligosaccharide-(1-&gt;3)-[oligosaccharide-(1-&gt;6)]-beta-D-Man-(1-&gt;4)-beta-D-GlcNAc-(1-&gt;4)-alpha-D-GlcNAc)-L-asparaginyl-[protein] + H2O = an oligosaccharide-(1-&gt;3)-[oligosaccharide-(1-&gt;6)]-beta-D-Man-(1-&gt;4)-D-GlcNAc + N(4)-(N-acetyl-beta-D-glucosaminyl)-L-asparaginyl-[protein]. Functionally, endoglycosidase with broad specificity that cleaves the chitobiose core of high mannose and complex N-linked glycans. Is able to release N-glycans from diverse host glycoproteins such as human and bovine lactoferrin, immunoglobulins A and G, and ribonuclease B. Is active directly on human breast milk - a complex matrix of lipids, oligosaccharides, and proteins with disparate glycosylation types - successfully removing a significant proportion of the total amount of N-glycans. Does not recognize O-linked glycans or free human milk oligosaccharides (HMO). This Bifidobacterium longum subsp. infantis (strain ATCC 15697 / DSM 20088 / JCM 1222 / NCTC 11817 / S12) protein is Endo-beta-N-acetylglucosaminidase.